The primary structure comprises 349 residues: 4-hydroxy-3-methylbut-2-enyl diphosphate reductase (349 aa).

Cys18 is a binding site for [4Fe-4S] cluster. Positions 47 and 83 each coordinate (2E)-4-hydroxy-3-methylbut-2-enyl diphosphate. Residues His47 and His83 each contribute to the dimethylallyl diphosphate site. The isopentenyl diphosphate site is built by His47 and His83. [4Fe-4S] cluster is bound at residue Cys105. A (2E)-4-hydroxy-3-methylbut-2-enyl diphosphate-binding site is contributed by His133. His133 contacts dimethylallyl diphosphate. His133 provides a ligand contact to isopentenyl diphosphate. Catalysis depends on Glu135, which acts as the Proton donor. (2E)-4-hydroxy-3-methylbut-2-enyl diphosphate is bound at residue Thr174. Cys204 contacts [4Fe-4S] cluster. Residues Ser232, Ser233, Asn234, and Ser277 each coordinate (2E)-4-hydroxy-3-methylbut-2-enyl diphosphate. Residues Ser232, Ser233, Asn234, and Ser277 each contribute to the dimethylallyl diphosphate site. 4 residues coordinate isopentenyl diphosphate: Ser232, Ser233, Asn234, and Ser277.

Belongs to the IspH family. [4Fe-4S] cluster is required as a cofactor.

The enzyme catalyses isopentenyl diphosphate + 2 oxidized [2Fe-2S]-[ferredoxin] + H2O = (2E)-4-hydroxy-3-methylbut-2-enyl diphosphate + 2 reduced [2Fe-2S]-[ferredoxin] + 2 H(+). The catalysed reaction is dimethylallyl diphosphate + 2 oxidized [2Fe-2S]-[ferredoxin] + H2O = (2E)-4-hydroxy-3-methylbut-2-enyl diphosphate + 2 reduced [2Fe-2S]-[ferredoxin] + 2 H(+). It functions in the pathway isoprenoid biosynthesis; dimethylallyl diphosphate biosynthesis; dimethylallyl diphosphate from (2E)-4-hydroxy-3-methylbutenyl diphosphate: step 1/1. It participates in isoprenoid biosynthesis; isopentenyl diphosphate biosynthesis via DXP pathway; isopentenyl diphosphate from 1-deoxy-D-xylulose 5-phosphate: step 6/6. In terms of biological role, catalyzes the conversion of 1-hydroxy-2-methyl-2-(E)-butenyl 4-diphosphate (HMBPP) into a mixture of isopentenyl diphosphate (IPP) and dimethylallyl diphosphate (DMAPP). Acts in the terminal step of the DOXP/MEP pathway for isoprenoid precursor biosynthesis. The polypeptide is 4-hydroxy-3-methylbut-2-enyl diphosphate reductase (Bartonella bacilliformis (strain ATCC 35685 / KC583 / Herrer 020/F12,63)).